The primary structure comprises 282 residues: uncharacterized protein (282 aa).

Tyr-50 acts as the Proton donor in catalysis. Position 115 (His-115) interacts with substrate.

It belongs to the aldo/keto reductase family.

This is an uncharacterized protein from Saccharomyces cerevisiae (strain ATCC 204508 / S288c) (Baker's yeast).